Reading from the N-terminus, the 178-residue chain is uncharacterized protein (178 aa).

A run of 2 helical transmembrane segments spans residues 6–26 and 154–174; these read AIFGLLSVIFVIMAISQVSGL and KELVITAVLIISILGLGAMLI.

The protein localises to the cell membrane. This is an uncharacterized protein from Methanocaldococcus jannaschii (strain ATCC 43067 / DSM 2661 / JAL-1 / JCM 10045 / NBRC 100440) (Methanococcus jannaschii).